Here is a 311-residue protein sequence, read N- to C-terminus: Aurora kinase (311 aa).

Residues 20–300 enclose the Protein kinase domain; sequence FEIGRFLGRG…IEDILRHPFL (281 aa). Lys-49 is a binding site for ATP. Asp-143 functions as the Proton acceptor in the catalytic mechanism. The tract at residues 189-216 is activation loop; it reads DFGWSVHHPTHGGRRRTQCGTLDYLPPE. Thr-205 carries the post-translational modification Phosphothreonine; by autocatalysis. Positions 280-299 match the Destruction (D)-box motif; the sequence is MLIRSPEARISIEDILRHPF.

It belongs to the protein kinase superfamily. Ser/Thr protein kinase family. Aurora subfamily. Interacts with EB1 (via C-terminal residues 101-238). Post-translationally, phosphorylated in mitosis and cytokinesis. Activated by autophosphorylation at Thr-205.

The protein localises to the nucleus. The protein resides in the cytoplasm. It localises to the cytoskeleton. It is found in the microtubule organizing center. Its subcellular location is the centrosome. The protein localises to the spindle. The protein resides in the spindle pole. It localises to the nucleus membrane. It carries out the reaction L-seryl-[protein] + ATP = O-phospho-L-seryl-[protein] + ADP + H(+). The catalysed reaction is L-threonyl-[protein] + ATP = O-phospho-L-threonyl-[protein] + ADP + H(+). Its activity is regulated as follows. Activated by cell-cycle phase specific phosphorylation. Inhibited by ATP-competitive inhibitors N-[4-[[6-Methoxy-7-[3-(4-morpholinyl)propoxy]-4-quinazolinyl]amino]phenyl]benzamide (ZM447439) and cyclopropanecarboxylic acid-(3-(4-(3-trifluoromethylphenylamino)-pyrimidin-2-ylamino)-phenyl)-amide (CFPPA). Inhibition leads to reduced growth, increased cytokinesis, microtubular defects, and increased ploidy of the cells. Involved in regulation of the cell cycle. Required for mitotic cell division and cytokinesis. Based on its localization to centrosomes and spindle microtubules, as well as to various cytoskeletal components such as the median body, parental attachment disk, and anterior and posterior-lateral paraflagellar dense rods, may coordinate reorganization and segregation of tubulin-containing structures during mitosis and cytokinesis. May regulate microtubule disassembly by phosphorylating cytoskeletal proteins leading to their destabilization. Phosphorylates EB1 at 'Ser-148' in vitro. Phosphorylates histone H3 in vitro. This is Aurora kinase from Giardia intestinalis (strain ATCC 50803 / WB clone C6) (Giardia lamblia).